Reading from the N-terminus, the 461-residue chain is uncharacterized protein (461 aa).

13 helical membrane-spanning segments follow: residues 13–33, 54–74, 81–101, 120–140, 170–190, 211–231, 256–276, 286–306, 314–334, 349–369, 377–397, 399–419, and 439–459; these read GIIF…LPFE, ALHV…LGLV, VGFA…ATAL, GNLF…SMWM, VFVL…TLVG, YGLP…YIIF, FIIF…NPFI, IASF…STGV, SNTD…SAVL, FMID…FIIF, TASA…LGMP, IGLA…PVAT, and VGFL…YMFW.

Belongs to the SLC13A/DASS transporter (TC 2.A.47) family. NADC subfamily.

Its subcellular location is the cell membrane. This is an uncharacterized protein from Haemophilus influenzae (strain ATCC 51907 / DSM 11121 / KW20 / Rd).